Here is a 327-residue protein sequence, read N- to C-terminus: MATAMTVSSKLRGLLMQQLRGTSQLYFNISLRSLSSSAQEASKRAPEEVSDHNYESIQVTSAQKHVLHVQLNRPEKRNAMNRAFWRELVECFQKISKDSDCRAVVVSGAGKMFTSGIDLMDMASELMQPSGDDAARIAWYLRDLISKYQKTFTVIEKCPKPVIAAIHGGCIGGGVDLVSACDIRYCTQDAFFQIKEVDMGLAADVGTLQRLPKVIGNQSLVNELTFSARKMMADEALDSGLVSRVFQDKDAMLNAAFALAADISSKSPVAVQGSKINLIYSRDHSVDESLDYMATWNMSMLQTQDIIKSVQAAMEKRDTKSITFSKL.

A mitochondrion-targeting transit peptide spans 1 to 33; it reads MATAMTVSSKLRGLLMQQLRGTSQLYFNISLRS. 115-119 contacts substrate; sequence SGIDL. Residue K147 is modified to N6-acetyllysine. G173 serves as a coordination point for substrate. K230 carries the N6-succinyllysine modification. S267 is modified (phosphoserine). The residue at position 316 (K316) is an N6-succinyllysine. The Microbody targeting signal signature appears at 325–327; the sequence is SKL. The residue at position 326 (K326) is an N6-acetyllysine.

Belongs to the enoyl-CoA hydratase/isomerase family. Homohexamer.

Its subcellular location is the mitochondrion. It is found in the peroxisome. It carries out the reaction (3E,5Z)-octadienoyl-CoA = (2E,4E)-octadienoyl-CoA. It catalyses the reaction (3E,5Z,8Z,11Z,14Z)-eicosapentaenoyl-CoA = (2E,4E,8Z,11Z,14Z)-eicosapentaenoyl-CoA. It functions in the pathway lipid metabolism; fatty acid beta-oxidation. Isomerization of 3-trans,5-cis-dienoyl-CoA to 2-trans,4-trans-dienoyl-CoA. This is Delta(3,5)-Delta(2,4)-dienoyl-CoA isomerase, mitochondrial from Mus musculus (Mouse).